We begin with the raw amino-acid sequence, 122 residues long: MTNEIKATFDVTTLEGRMKILNAKNAGGASLKTCVDGTIIEAVGIAQYQQESDTYGDMKEETVTAIFTADGDVISAISKTVAEAATEIIDLVKEFNLDTFKVKVSKQKSSKGNEFFSLLLVG.

The protein belongs to the phi29likevirus single-strand-binding protein family. As to quaternary structure, monomer.

Single-stranded DNA binding protein required for the elongation during viral DNA replication by strand displacement. Displaced viral DNA strands are transiently coated with the ssDNA-binding protein and therefore protected againt nucleases. The latter is then probably removed by the replisome that performs lagging strand synthesis or during the events that lead up to the recombination process. Has helix-destabilizing activity since it removes secondary structure from the ssDNA in replicative intermediates. The protein is Single-stranded DNA-binding protein (5) of Bacillus subtilis (Bacteriophage B103).